The chain runs to 83 residues: Large ribosomal subunit protein bL27 (83 aa).

A disordered region spans residues 1–21 (MAHKRSSGAGRNGRDSNPKYL).

Belongs to the bacterial ribosomal protein bL27 family.

This chain is Large ribosomal subunit protein bL27, found in Kosmotoga olearia (strain ATCC BAA-1733 / DSM 21960 / TBF 19.5.1).